The primary structure comprises 420 residues: Deoxyribodipyrimidine photo-lyase (420 aa).

One can recognise a Photolyase/cryptochrome alpha/beta domain in the interval 2 to 124; it reads GPLLVWHRGD…PLHLLPAPHL (123 aa). Residues 147–176 form a disordered region; sequence APPLPPPEALPKGPEEGEIPREDPGLPLPE. Positions 159–170 are enriched in basic and acidic residues; the sequence is GPEEGEIPREDP. Tyrosine 197 provides a ligand contact to FAD. Arginine 201 contacts DNA. FAD contacts are provided by residues 209–213, tryptophan 241, arginine 248, asparagine 310, and 341–343; these read GSRLS and DGD. Interaction with DNA stretches follow at residues 244-251 and 310-311; these read ELLWRDFS and NR. Glutamine 373 is a DNA binding site.

It belongs to the DNA photolyase class-1 family. As to quaternary structure, monomer. FAD serves as cofactor.

The catalysed reaction is cyclobutadipyrimidine (in DNA) = 2 pyrimidine residues (in DNA).. Its function is as follows. Involved in repair of UV radiation-induced DNA damage. Catalyzes the light-dependent monomerization (300-600 nm) of cyclobutyl pyrimidine dimers (in cis-syn configuration), which are formed between adjacent bases on the same DNA strand upon exposure to ultraviolet radiation. The sequence is that of Deoxyribodipyrimidine photo-lyase (phr) from Thermus thermophilus (strain ATCC 27634 / DSM 579 / HB8).